Reading from the N-terminus, the 442-residue chain is Limonoid 1-O-acetyltransferse (442 aa).

Residues His155 and Asp381 each act as proton acceptor in the active site.

It belongs to the plant acyltransferase family. In terms of assembly, monomer.

The enzyme catalyses (1S)-1-hydroxy-luvungin A + acetyl-CoA = (1S)-1-acetoxy-luvungin A + CoA. It functions in the pathway secondary metabolite biosynthesis; terpenoid biosynthesis. Acetyltransferase involved in the biosynthesis of limonoids triterpene natural products such as limonin, a compound with insecticidal activity responsible for the bitter taste in citrus. Catalyzes the formation of (1S)-1-acetoxy-luvungin A from (1S)-1-hydroxy-luvungin A. The sequence is that of Limonoid 1-O-acetyltransferse from Citrus sinensis (Sweet orange).